A 212-amino-acid chain; its full sequence is Uracil phosphoribosyltransferase (212 aa).

Residues R78, R103, and D130–S138 contribute to the 5-phospho-alpha-D-ribose 1-diphosphate site. Residues I193 and G198–A200 each bind uracil. 5-phospho-alpha-D-ribose 1-diphosphate is bound at residue D199.

Belongs to the UPRTase family. The cofactor is Mg(2+).

It carries out the reaction UMP + diphosphate = 5-phospho-alpha-D-ribose 1-diphosphate + uracil. Its pathway is pyrimidine metabolism; UMP biosynthesis via salvage pathway; UMP from uracil: step 1/1. With respect to regulation, allosterically activated by GTP. Functionally, catalyzes the conversion of uracil and 5-phospho-alpha-D-ribose 1-diphosphate (PRPP) to UMP and diphosphate. This is Uracil phosphoribosyltransferase from Pseudomonas putida (strain ATCC 700007 / DSM 6899 / JCM 31910 / BCRC 17059 / LMG 24140 / F1).